Reading from the N-terminus, the 740-residue chain is NAD(P)H-quinone oxidoreductase subunit 5, chloroplastic (740 aa).

17 consecutive transmembrane segments (helical) span residues 9-29 (WIIP…LLVV), 40-60 (WAFI…NISI), 89-109 (IDSL…MVLI), 125-145 (FAYL…SNLI), 147-167 (IYIF…FWFT), 185-205 (GDFG…SFEF), 219-239 (NTIN…GAIA), 258-278 (TPIS…FLVA), 290-310 (IMYF…TLAL), 327-347 (LGYI…FHLI), 354-374 (ALLF…VGYS), 396-416 (TTFL…CFWS), 425-445 (WLYS…TAFY), 521-538 (MFSF…PYPH), 545-565 (LLSV…GIPL), 599-619 (FVIN…IASF), and 720-740 (YLFV…YFVL).

The protein belongs to the complex I subunit 5 family. In terms of assembly, NDH is composed of at least 16 different subunits, 5 of which are encoded in the nucleus.

Its subcellular location is the plastid. The protein localises to the chloroplast thylakoid membrane. It carries out the reaction a plastoquinone + NADH + (n+1) H(+)(in) = a plastoquinol + NAD(+) + n H(+)(out). The enzyme catalyses a plastoquinone + NADPH + (n+1) H(+)(in) = a plastoquinol + NADP(+) + n H(+)(out). In terms of biological role, NDH shuttles electrons from NAD(P)H:plastoquinone, via FMN and iron-sulfur (Fe-S) centers, to quinones in the photosynthetic chain and possibly in a chloroplast respiratory chain. The immediate electron acceptor for the enzyme in this species is believed to be plastoquinone. Couples the redox reaction to proton translocation, and thus conserves the redox energy in a proton gradient. This is NAD(P)H-quinone oxidoreductase subunit 5, chloroplastic (ndhF) from Piper cenocladum (Ant piper).